The chain runs to 101 residues: Small ribosomal subunit protein uS14 (101 aa).

This sequence belongs to the universal ribosomal protein uS14 family. As to quaternary structure, part of the 30S ribosomal subunit. Contacts proteins S3 and S10.

Its function is as follows. Binds 16S rRNA, required for the assembly of 30S particles and may also be responsible for determining the conformation of the 16S rRNA at the A site. The chain is Small ribosomal subunit protein uS14 from Wigglesworthia glossinidia brevipalpis.